The primary structure comprises 254 residues: Ribosomal RNA small subunit methyltransferase J (254 aa).

S-adenosyl-L-methionine contacts are provided by residues 106 to 107 (RD) and Asp-177.

The protein belongs to the methyltransferase superfamily. RsmJ family.

Its subcellular location is the cytoplasm. It catalyses the reaction guanosine(1516) in 16S rRNA + S-adenosyl-L-methionine = N(2)-methylguanosine(1516) in 16S rRNA + S-adenosyl-L-homocysteine + H(+). In terms of biological role, specifically methylates the guanosine in position 1516 of 16S rRNA. The polypeptide is Ribosomal RNA small subunit methyltransferase J (Nitrosococcus oceani (strain ATCC 19707 / BCRC 17464 / JCM 30415 / NCIMB 11848 / C-107)).